A 271-amino-acid chain; its full sequence is Dehydrodolichyl diphosphate synthase 7 (271 aa).

Residues 24 to 41 traverse the membrane as a helical segment; that stretch reads FLFRVLCVGPIPTNISFI.

It belongs to the UPP synthase family. Mg(2+) is required as a cofactor.

It localises to the endoplasmic reticulum membrane. It functions in the pathway protein modification; protein glycosylation. Functionally, catalyzes cis-prenyl chain elongation to produce the polyprenyl backbone of dolichol, a glycosyl carrier-lipid required for the biosynthesis of several classes of glycoprotein. The sequence is that of Dehydrodolichyl diphosphate synthase 7 from Arabidopsis thaliana (Mouse-ear cress).